The primary structure comprises 393 residues: Probable acetyl-CoA acyltransferase (393 aa).

Cys88 (acyl-thioester intermediate) is an active-site residue. Residues His349 and Cys378 each act as proton acceptor in the active site.

The protein belongs to the thiolase-like superfamily. Thiolase family.

It localises to the cytoplasm. The catalysed reaction is 2 acetyl-CoA = acetoacetyl-CoA + CoA. The protein is Probable acetyl-CoA acyltransferase of Staphylococcus aureus (strain COL).